The chain runs to 492 residues: Lysine--tRNA ligase (492 aa).

Mg(2+) contacts are provided by E403 and E410.

It belongs to the class-II aminoacyl-tRNA synthetase family. Homodimer. Mg(2+) is required as a cofactor.

The protein resides in the cytoplasm. It carries out the reaction tRNA(Lys) + L-lysine + ATP = L-lysyl-tRNA(Lys) + AMP + diphosphate. This chain is Lysine--tRNA ligase, found in Mycoplasmoides gallisepticum (strain R(low / passage 15 / clone 2)) (Mycoplasma gallisepticum).